The primary structure comprises 143 residues: Small ribosomal subunit protein eS12 (143 aa).

Belongs to the eukaryotic ribosomal protein eS12 family.

This Hordeum vulgare (Barley) protein is Small ribosomal subunit protein eS12 (RPS12).